The primary structure comprises 142 residues: Baculoviral IAP repeat-containing protein 5 (142 aa).

A BIR repeat occupies 18 to 88 (RISTFKNWPF…KHSSGCAFLS (71 aa)). S20 is subject to Phosphoserine; by AURKC. K23 carries the post-translational modification N6-acetyllysine. Phosphothreonine; by CDK1 and CDK15 is present on T34. T48 carries the phosphothreonine modification. Residues C57, C60, H77, and C84 each contribute to the Zn(2+) site. Residues K90, K110, K112, and K115 each carry the N6-acetyllysine modification. T117 carries the post-translational modification Phosphothreonine; by AURKB. The residue at position 129 (K129) is an N6-acetyllysine.

It belongs to the IAP family. In terms of assembly, monomer or homodimer. Exists as a homodimer in the apo state and as a monomer in the CPC-bound state. The monomer protects cells against apoptosis more efficiently than the dimer. Only the dimeric form is capable of enhancing tubulin stability in cells. When phosphorylated, interacts with LAMTOR5/HBXIP; the resulting complex binds pro-CASP9, as well as active CASP9, but much less efficiently. Component of the chromosomal passenger complex (CPC) composed of at least BIRC5/survivin, CDCA8/borealin, INCENP, AURKB or AURKC; in the complex forms a triple-helix bundle-based subcomplex with INCENP and CDCA8. Interacts with JTB. Interacts (via BIR domain) with histone H3 phosphorylated at 'Thr-3' (H3pT3). Interacts with EVI5. Interacts with GTP-bound RAN in both the S and M phases of the cell cycle. Interacts with USP9X. Interacts with tubulin. Interacts with BIRC2/c-IAP1. The acetylated form at Lys-129 interacts with STAT3. The monomeric form deacetylated at Lys-129 interacts with XPO1/CRM1. The monomeric form interacts with XIAP/BIRC4. Both the dimeric and monomeric form can interact with DIABLO/SMAC. Interacts with BIRC6/bruce. Interacts with FBXL7; this interaction facilitates the polyubiquitination and subsequent proteasomal degradation of BIRC5 by the SCF(FBXL7) E3 ubiquitin-protein ligase complex. Post-translationally, ubiquitinated by the Cul9-RING ubiquitin-protein ligase complex, leading to its degradation. Ubiquitination is required for centrosomal targeting. Deubiquitinated by USP35 or USP38; leading to stabilization. Acetylation at Lys-129 results in its homodimerization, while deacetylation promotes the formation of monomers which heterodimerize with XPO1/CRM1 which facilitates its nuclear export. The acetylated form represses STAT3 transactivation. The dynamic equilibrium between its acetylation and deacetylation at Lys-129 determines its interaction with XPO1/CRM1, its subsequent subcellular localization, and its ability to inhibit STAT3 transactivation. In terms of processing, in vitro phosphorylation at Thr-117 by AURKB prevents interaction with INCENP and localization to mitotic chromosomes. Phosphorylation at Thr-48 by CK2 is critical for its mitotic and anti-apoptotic activities. Phosphorylation at Thr-34 by CDK15 is critical for its anti-apoptotic activity. Phosphorylation at Ser-20 by AURKC is critical for regulation of proper chromosome alignment and segregation, and possibly cytokinesis.

It is found in the cytoplasm. The protein resides in the nucleus. The protein localises to the chromosome. Its subcellular location is the centromere. It localises to the cytoskeleton. It is found in the spindle. The protein resides in the kinetochore. The protein localises to the midbody. Its function is as follows. Multitasking protein that has dual roles in promoting cell proliferation and preventing apoptosis. Component of a chromosome passage protein complex (CPC) which is essential for chromosome alignment and segregation during mitosis and cytokinesis. Acts as an important regulator of the localization of this complex; directs CPC movement to different locations from the inner centromere during prometaphase to midbody during cytokinesis and participates in the organization of the center spindle by associating with polymerized microtubules. Involved in the recruitment of CPC to centromeres during early mitosis via association with histone H3 phosphorylated at 'Thr-3' (H3pT3) during mitosis. The complex with RAN plays a role in mitotic spindle formation by serving as a physical scaffold to help deliver the RAN effector molecule TPX2 to microtubules. May counteract a default induction of apoptosis in G2/M phase. The acetylated form represses STAT3 transactivation of target gene promoters. May play a role in neoplasia. Inhibitor of CASP3 and CASP7. Essential for the maintenance of mitochondrial integrity and function. This is Baculoviral IAP repeat-containing protein 5 (BIRC5) from Felis catus (Cat).